The following is a 311-amino-acid chain: MSTENHSNYLQNKDLDNFSKTGYSNSRLSGNFFTTPQPELSFDAMTIVGNLNKTNAKKLSDFMSTEPQIRLWDILQTKFKAKALQEKVYIEYDKVKADSWDRRNMRVEFNPNKLTHEEMLWLKQNIIDYMEDDGFTRLDLAFDFEDDLSDYYAMTDKAVKKTIFYGRNGKPETKYFGVRDSDRFIRIYNKKQERKDNADVEVMSEHLWRVEIELKRDMVDYWNDCFDDLHILKPDWTTPEKVKEQAMVYLLLNEEGTWGKLERHAKYKYKQLIKEISPIDLTELMKSTLKENEKQLQKQIDFWQREFRFWK.

This sequence belongs to the plasmid replication initiation factor family.

Functionally, this protein is probably a specific topoisomerase involved in initiating replication. This protein is specifically required and may be rate-limiting for replication of the plasmid in vivo. The chain is Replication initiation protein (repD) from Staphylococcus aureus.